The following is an 83-amino-acid chain: FMRFamide-like neuropeptide 23 (83 aa).

The N-terminal stretch at 1-24 is a signal peptide; it reads MLLPKISILLYILVVLQETAAVRG. The propeptide occupies 25–36; the sequence is ALFRSGRAVPFE. A Phenylalanine amide modification is found at Phe-47. A propeptide spanning residues 50 to 83 is cleaved from the precursor; sequence AGMASGVGGGSEGGPDDVKNSYIRVNGEPEIVYQ.

This sequence belongs to the FARP (FMRFamide related peptide) family. In terms of tissue distribution, each flp gene is expressed in a distinct set of neurons.

It is found in the secreted. FMRFamides and FMRFamide-like peptides are neuropeptides. The protein is FMRFamide-like neuropeptide 23 (flp-23) of Caenorhabditis elegans.